Consider the following 364-residue polypeptide: MDNYEYSELLKELKNKISNVEAIIKPKILMTRLAEIEKTEQDPALWVDAKKAAQIGREKTKISNILAKFKKAQNELNDAKEFYELAVSENDGETINELFRESAKLSENIANLELSMMLSGENDDKNAIINIHPGAGGTEGEDWAGMLYRMYVRFCERVGYKIEILDFQEGDEAGIKDVNFIVKGENAYGYLKVESGIHRLVRISPFDSAGRRHTSFASVVVSPELDDDIQINIDEKDLRIDYYRSSGAGGQHVNKTESAVRITHIPTNIVVQCQNDRDQHKNKASAMKVLKSRLYELEKLKKQEESNKTPKSDIAWGYQIRNYVLFPYQQVKDLRSNIAYSQAEAILDGDIKKILEDVLINNQS.

Gln251 carries the N5-methylglutamine modification.

This sequence belongs to the prokaryotic/mitochondrial release factor family. Post-translationally, methylated by PrmC. Methylation increases the termination efficiency of RF2.

Its subcellular location is the cytoplasm. Functionally, peptide chain release factor 2 directs the termination of translation in response to the peptide chain termination codons UGA and UAA. The polypeptide is Peptide chain release factor 2 (Campylobacter hominis (strain ATCC BAA-381 / DSM 21671 / CCUG 45161 / LMG 19568 / NCTC 13146 / CH001A)).